Here is a 174-residue protein sequence, read N- to C-terminus: MDVVKKSRNVHGANDFSELIVSVRRVAKVVKGGRRFSFSVLVVIGDEKGKVGCGIGKHLEVSEAKVKAVNAAKKNMIRVHLRESRTLHHDVKAKFCASKVMLRSAKVGTGIIAGGSIRLIFEVLGVQDVVAKSIGSSNPHNVVYAVFAAFKKMLSPKQVANKRSRKIGDIIENR.

The 64-residue stretch at 16–79 folds into the S5 DRBM domain; the sequence is FSELIVSVRR…NAAKKNMIRV (64 aa).

It belongs to the universal ribosomal protein uS5 family. Part of the 30S ribosomal subunit. Contacts proteins S4 and S8.

Its function is as follows. With S4 and S12 plays an important role in translational accuracy. Functionally, located at the back of the 30S subunit body where it stabilizes the conformation of the head with respect to the body. This is Small ribosomal subunit protein uS5 from Ehrlichia canis (strain Jake).